Here is a 516-residue protein sequence, read N- to C-terminus: Methionine--tRNA ligase (516 aa).

The 'HIGH' region motif lies at 14-24 (SYPNGKPHIGH). The short motif at 302–306 (KMSKS) is the 'KMSKS' region element. ATP is bound at residue lysine 305.

This sequence belongs to the class-I aminoacyl-tRNA synthetase family. MetG type 2B subfamily. As to quaternary structure, monomer.

Its subcellular location is the cytoplasm. It carries out the reaction tRNA(Met) + L-methionine + ATP = L-methionyl-tRNA(Met) + AMP + diphosphate. Its function is as follows. Is required not only for elongation of protein synthesis but also for the initiation of all mRNA translation through initiator tRNA(fMet) aminoacylation. The protein is Methionine--tRNA ligase of Rhizobium meliloti (strain 1021) (Ensifer meliloti).